Consider the following 365-residue polypeptide: tRNA/tmRNA (uracil-C(5))-methyltransferase (365 aa).

S-adenosyl-L-methionine contacts are provided by Q189, Y217, N222, E238, and D298. Catalysis depends on C323, which acts as the Nucleophile. Residue E357 is the Proton acceptor of the active site.

The protein belongs to the class I-like SAM-binding methyltransferase superfamily. RNA M5U methyltransferase family. TrmA subfamily.

It carries out the reaction uridine(54) in tRNA + S-adenosyl-L-methionine = 5-methyluridine(54) in tRNA + S-adenosyl-L-homocysteine + H(+). The catalysed reaction is uridine(341) in tmRNA + S-adenosyl-L-methionine = 5-methyluridine(341) in tmRNA + S-adenosyl-L-homocysteine + H(+). In terms of biological role, dual-specificity methyltransferase that catalyzes the formation of 5-methyluridine at position 54 (m5U54) in all tRNAs, and that of position 341 (m5U341) in tmRNA (transfer-mRNA). The polypeptide is tRNA/tmRNA (uracil-C(5))-methyltransferase (Shewanella baltica (strain OS185)).